The following is a 230-amino-acid chain: Preflagellin peptidase (230 aa).

A topological domain (cytoplasmic) is located at residue Met-1. A helical transmembrane segment spans residues 2–18; the sequence is IEYIIGALGLIIASVQD. Topologically, residues 19-23 are extracellular; it reads FRSRE. Residues 24–46 form a helical membrane-spanning segment; it reads IEDYIWIFLAVFGVLFAIYSSIT. The Cytoplasmic portion of the chain corresponds to 47–49; the sequence is LLD. Residues 50–72 form a helical membrane-spanning segment; that stretch reads YSILINSISGFVICFILGYMMFL. At 73–78 the chain is on the extracellular side; the sequence is SGIGGG. Residues 79 to 89 traverse the membrane as a helical segment; sequence DGKMLIGLGAL. Topologically, residues 90–110 are cytoplasmic; the sequence is VPKFQMPIYTSLGTLLNLNYV. The chain crosses the membrane as a helical span at residues 111–139; the sequence is PTFPIMVFINGIFFMVFLPFVILFRNILN. The Extracellular portion of the chain corresponds to 140–204; the sequence is GARPKTGKEF…EEIWVTPQIP (65 aa). The chain crosses the membrane as a helical span at residues 205-216; sequence LIIPITLSYLVT. Residues 217–230 are Cytoplasmic-facing; the sequence is PIIGDRILDFLIPF.

This sequence belongs to the peptidase A24 family. Archaeal preflagellin peptidase subfamily.

The protein localises to the cell membrane. The enzyme catalyses Cleaves the signal peptide of 3 to 12 amino acids from the N-terminal of preflagellin, usually at Arg-Gly-|- or Lys-Gly-|-, to release flagellin.. Its function is as follows. Cleaves the N-terminal leader peptide from preflagellins. In Methanococcus maripaludis (strain C6 / ATCC BAA-1332), this protein is Preflagellin peptidase (flaK).